The sequence spans 216 residues: Dephospho-CoA kinase (216 aa).

A DPCK domain is found at 18-216 (IIGVIGPPCS…SELASVLQSK (199 aa)). Residue 26–31 (CSGKST) coordinates ATP.

The protein belongs to the CoaE family.

Its subcellular location is the cytoplasm. The enzyme catalyses 3'-dephospho-CoA + ATP = ADP + CoA + H(+). It functions in the pathway cofactor biosynthesis; coenzyme A biosynthesis; CoA from (R)-pantothenate: step 5/5. Its function is as follows. Catalyzes the phosphorylation of the 3'-hydroxyl group of dephosphocoenzyme A to form coenzyme A. The polypeptide is Dephospho-CoA kinase (Rhodopirellula baltica (strain DSM 10527 / NCIMB 13988 / SH1)).